A 384-amino-acid chain; its full sequence is Substance-K receptor (384 aa).

Residues 1-32 (MGACVVMTDINISSGLDSNATGITAFSMPGWQ) are Extracellular-facing. N-linked (GlcNAc...) asparagine glycans are attached at residues Asn-11 and Asn-19. Residues 33 to 56 (LALWTAAYLALVLVAVMGNATVIW) traverse the membrane as a helical segment. Residues 57-69 (IILAHQRMRTVTN) are Cytoplasmic-facing. Residues 70–90 (YFIVNLALADLCMAAFNAAFN) traverse the membrane as a helical segment. At 91–107 (FVYASHNIWYFGRAFCY) the chain is on the extracellular side. Cys-106 and Cys-181 are disulfide-bonded. A helical membrane pass occupies residues 108–129 (FQNLFPITAMFVSIYSMTAIAA). At 130-149 (DRYMAIVHPFQPRLSAPGTR) the chain is on the cytoplasmic side. The helical transmembrane segment at 150-170 (AVIAGIWLVALALAFPQCFYS) threads the bilayer. Residues 171 to 196 (TITTDEGATKCVVAWPEDSGGKMLLL) lie on the Extracellular side of the membrane. Residues 197–218 (YHLIVIALIYFLPLVVMFVAYS) traverse the membrane as a helical segment. Residues 219–251 (VIGLTLWRRSVPGHQAHGANLRHLQAKKKFVKT) lie on the Cytoplasmic side of the membrane. The chain crosses the membrane as a helical span at residues 252 to 272 (MVLVVVTFAICWLPYHLYFIL). At 273 to 290 (GTFQEDIYCHKFIQQVYL) the chain is on the extracellular side. The helical transmembrane segment at 291–310 (ALFWLAMSSTMYNPIIYCCL) threads the bilayer. Residues 311–384 (NHRFRSGFRL…SPQAGVSTEP (74 aa)) are Cytoplasmic-facing. The S-palmitoyl cysteine moiety is linked to residue Cys-324.

The protein belongs to the G-protein coupled receptor 1 family.

It localises to the cell membrane. This is a receptor for the tachykinin neuropeptide substance K (neurokinin A). It is associated with G proteins that activate a phosphatidylinositol-calcium second messenger system. The rank order of affinity of this receptor to tachykinins is: substance K &gt; neuromedin-K &gt; substance P. This Bos taurus (Bovine) protein is Substance-K receptor (TACR2).